The sequence spans 381 residues: ATP-dependent (S)-NAD(P)H-hydrate dehydratase (381 aa).

Positions 84–376 (AEAVVRRITP…EFLGKSLEDI (293 aa)) constitute a YjeF C-terminal domain. (6S)-NADPHX is bound by residues G197 and 250 to 256 (NVYEYKR). ATP contacts are provided by residues 290 to 294 (KGKAD) and 309 to 318 (GSPRRCGGQG). D319 is a binding site for (6S)-NADPHX.

This sequence belongs to the NnrD/CARKD family. Mg(2+) is required as a cofactor.

It carries out the reaction (6S)-NADHX + ATP = ADP + phosphate + NADH + H(+). The enzyme catalyses (6S)-NADPHX + ATP = ADP + phosphate + NADPH + H(+). Catalyzes the dehydration of the S-form of NAD(P)HX at the expense of ATP, which is converted to ADP. Together with NAD(P)HX epimerase, which catalyzes the epimerization of the S- and R-forms, the enzyme allows the repair of both epimers of NAD(P)HX, a damaged form of NAD(P)H that is a result of enzymatic or heat-dependent hydration. This is ATP-dependent (S)-NAD(P)H-hydrate dehydratase from Sorghum bicolor (Sorghum).